A 757-amino-acid chain; its full sequence is Cap-specific mRNA (nucleoside-2'-O-)-methyltransferase 1 (757 aa).

Residues 1–61 are disordered; the sequence is MFQSNQYDEY…EDDEEEEDTP (61 aa). Composition is skewed to acidic residues over residues 18-32 and 40-59; these read EENE…NENE and GDQD…EEED. Residues 62-108 form the G-patch domain; sequence KLSFGAKFLAKHGHIEGQGLGKEKDGRIDLIEVDRFQSTKGLGFAEN. A RrmJ-type SAM-dependent 2'-O-MTase domain is found at 214-438; sequence IFINRAAVKM…ERYIICKNFL (225 aa). Gly-257, Glu-301, and Asp-352 together coordinate S-adenosyl-L-methionine. Lys-392 (proton acceptor) is an active-site residue. The span at 538 to 548 shows a compositional bias: basic residues; it reads HKNRQKHHHNN. The interval 538 to 670 is disordered; it reads HKNRQKHHHN…NNNNNNNNKN (133 aa). Residues 549 to 569 are compositionally biased toward low complexity; it reads HSNNNNNNNNSNNNNNNNNQH. Positions 570-581 are enriched in basic residues; it reads QHQHHQHQHHQN. Residues 597 to 668 show a composition bias toward low complexity; the sequence is NNNINNNSNN…NNNNNNNNNN (72 aa).

It carries out the reaction a 5'-end (N(7)-methyl 5'-triphosphoguanosine)-ribonucleoside in mRNA + S-adenosyl-L-methionine = a 5'-end (N(7)-methyl 5'-triphosphoguanosine)-(2'-O-methyl-ribonucleoside) in mRNA + S-adenosyl-L-homocysteine + H(+). In terms of biological role, S-adenosyl-L-methionine-dependent methyltransferase that mediates mRNA cap1 2'-O-ribose methylation to the 5'-cap structure of mRNAs. Methylates the ribose of the first nucleotide of a m(7)GpppG-capped mRNA to produce m(7)GpppNmp (cap1). Cap1 modification is linked to higher levels of translation. The polypeptide is Cap-specific mRNA (nucleoside-2'-O-)-methyltransferase 1 (Dictyostelium discoideum (Social amoeba)).